Here is a 361-residue protein sequence, read N- to C-terminus: Molybdenum import ATP-binding protein ModC (361 aa).

The ABC transporter domain maps to 1–235; it reads MDGLRLRFRR…VDLPLALDDD (235 aa). 33–40 contributes to the ATP binding site; sequence GHSGSGKS. The region spanning 296 to 361 is the Mop domain; sequence QSSILNRLPV…AQIKSVAVLA (66 aa).

It belongs to the ABC transporter superfamily. Molybdate importer (TC 3.A.1.8) family. As to quaternary structure, the complex is composed of two ATP-binding proteins (ModC), two transmembrane proteins (ModB) and a solute-binding protein (ModA).

The protein resides in the cell inner membrane. The catalysed reaction is molybdate(out) + ATP + H2O = molybdate(in) + ADP + phosphate + H(+). In terms of biological role, part of the ABC transporter complex ModABC involved in molybdenum import. Responsible for energy coupling to the transport system. This Pseudomonas aeruginosa (strain ATCC 15692 / DSM 22644 / CIP 104116 / JCM 14847 / LMG 12228 / 1C / PRS 101 / PAO1) protein is Molybdenum import ATP-binding protein ModC.